We begin with the raw amino-acid sequence, 170 residues long: tRNA-splicing endonuclease (170 aa).

Catalysis depends on residues Tyr106, His116, and Lys147.

The protein belongs to the tRNA-intron endonuclease family. Archaeal short subfamily. In terms of assembly, homotetramer; although the tetramer contains four active sites, only two participate in the cleavage. Therefore, it should be considered as a dimer of dimers.

The enzyme catalyses pretRNA = a 3'-half-tRNA molecule with a 5'-OH end + a 5'-half-tRNA molecule with a 2',3'-cyclic phosphate end + an intron with a 2',3'-cyclic phosphate and a 5'-hydroxyl terminus.. Functionally, endonuclease that removes tRNA introns. Cleaves pre-tRNA at the 5'- and 3'-splice sites to release the intron. The products are an intron and two tRNA half-molecules bearing 2',3' cyclic phosphate and 5'-OH termini. Recognizes a pseudosymmetric substrate in which 2 bulged loops of 3 bases are separated by a stem of 4 bp. This is tRNA-splicing endonuclease from Methanothermobacter thermautotrophicus (strain ATCC 29096 / DSM 1053 / JCM 10044 / NBRC 100330 / Delta H) (Methanobacterium thermoautotrophicum).